A 191-amino-acid chain; its full sequence is Protein DMP10 (191 aa).

The next 4 membrane-spanning stretches (helical) occupy residues 15–35 (FANLLPTGTALIFETLLPSFS), 48–68 (LLTITLISFCAAACFFSSFTD), 114–134 (LSFVDFVHAFVSVIVFLALAV), and 158–178 (LMIKYFAVMVLTMASFFFAIF).

Belongs to the plant DMP1 protein family. As to expression, restricted to flowers.

It localises to the membrane. Its function is as follows. Involved in membrane remodeling. In Arabidopsis thaliana (Mouse-ear cress), this protein is Protein DMP10.